We begin with the raw amino-acid sequence, 190 residues long: Elongation factor P-like protein (190 aa).

Belongs to the elongation factor P family.

The polypeptide is Elongation factor P-like protein (Pseudoalteromonas atlantica (strain T6c / ATCC BAA-1087)).